We begin with the raw amino-acid sequence, 740 residues long: Phosphoribosylformylglycinamidine synthase subunit PurL (740 aa).

Residue H50 is part of the active site. Residues Y53 and K92 each contribute to the ATP site. E94 lines the Mg(2+) pocket. Substrate contacts are provided by residues S95–H98 and R117. H96 functions as the Proton acceptor in the catalytic mechanism. D118 is a binding site for Mg(2+). Q241 lines the substrate pocket. Mg(2+) is bound at residue D269. E313 to Q315 provides a ligand contact to substrate. Positions 495 and 532 each coordinate ATP. N533 provides a ligand contact to Mg(2+). S535 lines the substrate pocket.

The protein belongs to the FGAMS family. As to quaternary structure, monomer. Part of the FGAM synthase complex composed of 1 PurL, 1 PurQ and 2 PurS subunits.

It is found in the cytoplasm. It catalyses the reaction N(2)-formyl-N(1)-(5-phospho-beta-D-ribosyl)glycinamide + L-glutamine + ATP + H2O = 2-formamido-N(1)-(5-O-phospho-beta-D-ribosyl)acetamidine + L-glutamate + ADP + phosphate + H(+). It functions in the pathway purine metabolism; IMP biosynthesis via de novo pathway; 5-amino-1-(5-phospho-D-ribosyl)imidazole from N(2)-formyl-N(1)-(5-phospho-D-ribosyl)glycinamide: step 1/2. Its function is as follows. Part of the phosphoribosylformylglycinamidine synthase complex involved in the purines biosynthetic pathway. Catalyzes the ATP-dependent conversion of formylglycinamide ribonucleotide (FGAR) and glutamine to yield formylglycinamidine ribonucleotide (FGAM) and glutamate. The FGAM synthase complex is composed of three subunits. PurQ produces an ammonia molecule by converting glutamine to glutamate. PurL transfers the ammonia molecule to FGAR to form FGAM in an ATP-dependent manner. PurS interacts with PurQ and PurL and is thought to assist in the transfer of the ammonia molecule from PurQ to PurL. The sequence is that of Phosphoribosylformylglycinamidine synthase subunit PurL from Brucella canis (strain ATCC 23365 / NCTC 10854 / RM-666).